A 303-amino-acid chain; its full sequence is Dihydroorotate dehydrogenase B (NAD(+)), catalytic subunit (303 aa).

Residues Ser-21 and 45–46 contribute to the FMN site; that span reads KG. Residues Lys-45 and 69–73 each bind substrate; that span reads NAVGL. 2 residues coordinate FMN: Asn-99 and Asn-127. Asn-127 is a binding site for substrate. Cys-130 acts as the Nucleophile in catalysis. Residues Lys-165 and Ile-191 each coordinate FMN. Residue 192 to 193 coordinates substrate; that stretch reads NT. FMN is bound by residues Gly-217, 243–244, and 265–266; these read GG and GT.

Belongs to the dihydroorotate dehydrogenase family. Type 1 subfamily. As to quaternary structure, heterotetramer of 2 PyrK and 2 PyrD type B subunits. Requires FMN as cofactor.

The protein localises to the cytoplasm. The enzyme catalyses (S)-dihydroorotate + NAD(+) = orotate + NADH + H(+). It functions in the pathway pyrimidine metabolism; UMP biosynthesis via de novo pathway; orotate from (S)-dihydroorotate (NAD(+) route): step 1/1. In terms of biological role, catalyzes the conversion of dihydroorotate to orotate with NAD(+) as electron acceptor. This chain is Dihydroorotate dehydrogenase B (NAD(+)), catalytic subunit (pyrD), found in Bacteroides thetaiotaomicron (strain ATCC 29148 / DSM 2079 / JCM 5827 / CCUG 10774 / NCTC 10582 / VPI-5482 / E50).